An 801-amino-acid polypeptide reads, in one-letter code: Protocadherin beta-8 (801 aa).

A signal peptide spans 1–29 (MEASGKLICRQRQVLFSFLLLGLSLAGAA). Residues 30 to 691 (EPRSYSVVEE…GQADSLTVYL (662 aa)) lie on the Extracellular side of the membrane. 5 consecutive Cadherin domains span residues 36-134 (VVEE…SPVF), 139-243 (MLVK…APEF), 248-348 (YRVQ…APEV), 353-452 (FTSP…APAF), and 457-562 (YTLF…SPFV). C97 and C103 are oxidised to a cystine. N419 and N437 each carry an N-linked (GlcNAc...) asparagine glycan. N568 carries an N-linked (GlcNAc...) asparagine glycan. The region spanning 569–672 (SSAPCTELVP…LVDGFSQPYL (104 aa)) is the Cadherin 6 domain. The chain crosses the membrane as a helical span at residues 692-710 (VVALASVSSLFLFSVLLFV). The Cytoplasmic segment spans residues 711–801 (AVRLCRRSRA…NGFGFSLQLK (91 aa)).

As to quaternary structure, forms homodimers in trans (molecules expressed by two different cells). Forms promiscuous heterodimers in cis (at the plasma membrane of the same cell) with other protocadherins.

It is found in the cell membrane. Its function is as follows. Calcium-dependent cell-adhesion protein involved in cells self-recognition and non-self discrimination. Thereby, it is involved in the establishment and maintenance of specific neuronal connections in the brain. The sequence is that of Protocadherin beta-8 from Pan troglodytes (Chimpanzee).